Here is a 1108-residue protein sequence, read N- to C-terminus: Probable arabinosyltransferase A (1108 aa).

A run of 13 helical transmembrane segments spans residues 12 to 34, 204 to 223, 258 to 280, 334 to 356, 368 to 387, 397 to 414, 421 to 443, 463 to 482, 531 to 553, 582 to 604, 616 to 638, 653 to 675, and 696 to 718; these read IPRS…VPLL, IVMV…LAVL, VGLA…HVVG, VWMR…HWVL, ANRV…WLPF, IALG…AIAL, AVAV…AVAA, GLLA…LVVV, FAVL…RGHV, WAVQ…AFAC, TLYV…GWFY, IASH…LAAW, and VLAS…ASLT. The segment at 804-825 is disordered; sequence PGLVNSDASPNKPNVAYSDSAG.

It belongs to the emb family.

The protein resides in the cell membrane. Arabinosyl transferase responsible for the polymerization of arabinose into the arabinan of arabinogalactan. This chain is Probable arabinosyltransferase A (embA), found in Mycobacterium avium.